The sequence spans 706 residues: DNA ligase (706 aa).

NAD(+) contacts are provided by residues 48–52, 97–98, and Glu131; these read DAAYD and SL. Residue Lys133 is the N6-AMP-lysine intermediate of the active site. Residues Arg154, Glu191, Lys307, and Lys331 each contribute to the NAD(+) site. The Zn(2+) site is built by Cys425, Cys428, Cys443, and Cys449. Residues 628–706 form the BRCT domain; sequence RADSAVAGKT…EDEWLKLIEG (79 aa).

Belongs to the NAD-dependent DNA ligase family. LigA subfamily. Mg(2+) is required as a cofactor. Requires Mn(2+) as cofactor.

It carries out the reaction NAD(+) + (deoxyribonucleotide)n-3'-hydroxyl + 5'-phospho-(deoxyribonucleotide)m = (deoxyribonucleotide)n+m + AMP + beta-nicotinamide D-nucleotide.. DNA ligase that catalyzes the formation of phosphodiester linkages between 5'-phosphoryl and 3'-hydroxyl groups in double-stranded DNA using NAD as a coenzyme and as the energy source for the reaction. It is essential for DNA replication and repair of damaged DNA. In Afipia carboxidovorans (strain ATCC 49405 / DSM 1227 / KCTC 32145 / OM5) (Oligotropha carboxidovorans), this protein is DNA ligase.